Here is a 1266-residue protein sequence, read N- to C-terminus: MALPMVGLLLLLLLGGPGAAITIPPEYGAHDFLQPPELTEEPPEQLVVFPSDDIVLKCVATGNPPVQYRWSREDQPFVPEEHGGVSVVPGSGTLVINATLAARLQGRFRCFATNALGTAVSPEANVIAENTPQWPKEKVTPVEVEEGDPVVLPCDPPESAVPPKIYWLNSDIVHIAQDERVSMGQDGNLYFSNAMVGDSHPDYICHAHFLGPRTIIQKEPLDLRVAPSNAVRSRRPRLLLPRDPQTTTIALRGGSVVLECIAEGLPTPWVRWRRLNGPLLPGGVGNFNKTLRLWGVTESDDGEYECVAENGRGTARGTHSVTVEAAPYWVRRPQSGVFGPGETARLDCEVGGKPRPQIQWSINGVPIEAAGAERRWLRGGALVLPELRPNDSAVLQCEARNRHGPLLANAFLHVVELPLRMLTADEQRYEVVENQTVFLHCRTFGAPAPNVEWLTPTLEPALQDDRSFVFTNGSLRVSAVRGGDGGVYTCMAQNAHSNGSLTALLEVRAPTRISAPPRSATAKKGETVTFHCGATFDPAVTPGELRWLRGGQPLPDDPRYSVAAEMTVSNVDYGDEGTIQCRASTPLDSAEAEAQLRVVGRPPSRDLQVMEVDEHRVRLSWTPGDDHNSPIEKFVVEEEEEREDLQRGFGAADVPGQPWTPPLPLSPYGRFPFRVVAVNAYGRGEHHAPSAPIETPPAAPERNPGGVHGEGNETGNLVITWEPLPPQAWNAPWARYRVQWRPLEEPGGGGPSGGFPWAESTVDAPPVVVGGLPPFSPFQIRVQAVNGAGKGPEATPGVGHSGEDLPLVYPENVGVELLNSSTVRVRWTLGGGPKELRGRLRGFRVLYWRLGWVGERSRRQAPPDPPQIPQSPAEDPPPFPPVALTVGGDARGALLGGLRPWSRYQLRVLVFNGRGDGPPSEPIAFETPEGVPGPPEELRVERLDDTALSVVERRTFKRSITGYVLRYQQVEPGSALPGGSVLRDPQCDLRGLNARSRYRLALPSTPRERPALQTVGSTKPEPPSPLWSRFGVGGRGGFHGAAVEFGAAQEDDVEFEVQFMNKSTDEPWRTSGRANSSLRRYRLEGLRPGTAYRVQFVGRNRSGENVAFWESEVQTNGTVVPQPGGGVCTKGWFIGFVSSVVLLLLILLILCFIKRSKGGKYSVKDKEDTQVDSEARPMKDETFGEYRSLESEAEKGSASGSGAGSGVGSPGRGPCAAGSEDSLAGYGGSGDVQFNEDGSFIGQYRGPGAGPGSSGPASPCAGPPLD.

The first 20 residues, 1–20 (MALPMVGLLLLLLLGGPGAA), serve as a signal peptide directing secretion. Over 21–1130 (ITIPPEYGAH…PQPGGGVCTK (1110 aa)) the chain is Extracellular. Ig-like C2-type domains lie at 36–128 (PELT…NVIA), 135–221 (PKEK…KEPL), 236–322 (PRLL…HSVT), 327–413 (PYWV…AFLH), 418–506 (PLRM…ALLE), and 510–597 (PTRI…AQLR). Disulfide bonds link C58–C110, C154–C205, C260–C306, and C348–C397. The N-linked (GlcNAc...) asparagine glycan is linked to N97. N-linked (GlcNAc...) asparagine glycosylation is found at N288, N390, N434, N472, and N498. C441 and C490 are oxidised to a cystine. C532 and C581 are disulfide-bonded. Fibronectin type-III domains follow at residues 603 to 698 (PSRD…TPPA), 700 to 804 (PERN…SGED), 809 to 930 (YPEN…TPEG), 934 to 1021 (PPEE…TKPE), and 1022 to 1118 (PPSP…TNGT). Residues 685–710 (EHHAPSAPIETPPAAPERNPGGVHGE) are disordered. 2 N-linked (GlcNAc...) asparagine glycosylation sites follow: N712 and N819. Positions 857–882 (SRRQAPPDPPQIPQSPAEDPPPFPPV) are disordered. A compositionally biased stretch (pro residues) spans 862 to 881 (PPDPPQIPQSPAEDPPPFPP). Residues 914-916 (RGD) carry the Cell attachment site motif. A disordered region spans residues 1004–1025 (STPRERPALQTVGSTKPEPPSP). 4 N-linked (GlcNAc...) asparagine glycosylation sites follow: N1061, N1075, N1100, and N1116. The helical transmembrane segment at 1131 to 1153 (GWFIGFVSSVVLLLLILLILCFI) threads the bilayer. Residues 1154 to 1266 (KRSKGGKYSV…ASPCAGPPLD (113 aa)) are Cytoplasmic-facing. The segment covering 1163–1195 (VKDKEDTQVDSEARPMKDETFGEYRSLESEAEK) has biased composition (basic and acidic residues). The disordered stretch occupies residues 1163-1266 (VKDKEDTQVD…ASPCAGPPLD (104 aa)). Residues 1199 to 1211 (SGSGAGSGVGSPG) are compositionally biased toward gly residues.

Belongs to the immunoglobulin superfamily. L1/neurofascin/NgCAM family. As to quaternary structure, binds to itself and to axonin 1. Brain.

The protein localises to the cell membrane. Mediates the adhesion of neurons to neurons and neurons to glia. It is involved in neuronal migration, neurite fasciculation and outgrowth. The chain is Neuronal-glial cell adhesion molecule from Gallus gallus (Chicken).